Here is a 116-residue protein sequence, read N- to C-terminus: Ribosome-binding factor A (116 aa).

Belongs to the RbfA family. Monomer. Binds 30S ribosomal subunits, but not 50S ribosomal subunits or 70S ribosomes.

The protein resides in the cytoplasm. In terms of biological role, one of several proteins that assist in the late maturation steps of the functional core of the 30S ribosomal subunit. Associates with free 30S ribosomal subunits (but not with 30S subunits that are part of 70S ribosomes or polysomes). Required for efficient processing of 16S rRNA. May interact with the 5'-terminal helix region of 16S rRNA. The protein is Ribosome-binding factor A of Chlorobium phaeobacteroides (strain DSM 266 / SMG 266 / 2430).